A 384-amino-acid polypeptide reads, in one-letter code: Dual-specificity RNA methyltransferase RlmN (384 aa).

E105 acts as the Proton acceptor in catalysis. The 240-residue stretch at 111–350 (EDDRATLCVS…TIVRKTRGDD (240 aa)) folds into the Radical SAM core domain. Residues C118 and C355 are joined by a disulfide bond. [4Fe-4S] cluster-binding residues include C125, C129, and C132. S-adenosyl-L-methionine-binding positions include 179–180 (GE), S211, 233–235 (SLH), and N312. C355 functions as the S-methylcysteine intermediate in the catalytic mechanism.

This sequence belongs to the radical SAM superfamily. RlmN family. Requires [4Fe-4S] cluster as cofactor.

It localises to the cytoplasm. The catalysed reaction is adenosine(2503) in 23S rRNA + 2 reduced [2Fe-2S]-[ferredoxin] + 2 S-adenosyl-L-methionine = 2-methyladenosine(2503) in 23S rRNA + 5'-deoxyadenosine + L-methionine + 2 oxidized [2Fe-2S]-[ferredoxin] + S-adenosyl-L-homocysteine. The enzyme catalyses adenosine(37) in tRNA + 2 reduced [2Fe-2S]-[ferredoxin] + 2 S-adenosyl-L-methionine = 2-methyladenosine(37) in tRNA + 5'-deoxyadenosine + L-methionine + 2 oxidized [2Fe-2S]-[ferredoxin] + S-adenosyl-L-homocysteine. Specifically methylates position 2 of adenine 2503 in 23S rRNA and position 2 of adenine 37 in tRNAs. m2A2503 modification seems to play a crucial role in the proofreading step occurring at the peptidyl transferase center and thus would serve to optimize ribosomal fidelity. The sequence is that of Dual-specificity RNA methyltransferase RlmN from Escherichia coli O17:K52:H18 (strain UMN026 / ExPEC).